The sequence spans 253 residues: UPF0246 protein LBA1843 (253 aa).

This sequence belongs to the UPF0246 family.

The polypeptide is UPF0246 protein LBA1843 (Lactobacillus acidophilus (strain ATCC 700396 / NCK56 / N2 / NCFM)).